Reading from the N-terminus, the 134-residue chain is MSYAIIQTGGKQYKVKAGEILKIERLEDSKPETKIEFKEILAYGDDKTIEVGSPVVEGAKVEADLVENGKNRTILIFKKRRRQNSRRKNGHRQQYSLIRISKIFSKDGKVLSEAEKMVKPTKKVEKVETEVASK.

The protein belongs to the bacterial ribosomal protein bL21 family. As to quaternary structure, part of the 50S ribosomal subunit. Contacts protein L20.

Its function is as follows. This protein binds to 23S rRNA in the presence of protein L20. The chain is Large ribosomal subunit protein bL21 from Pelagibacter ubique (strain HTCC1062).